We begin with the raw amino-acid sequence, 490 residues long: Homoserine O-acetyltransferase (490 aa).

The 307-residue stretch at 47–353 (NAILVCHALT…SQFGHDAFLI (307 aa)) folds into the AB hydrolase-1 domain. Residue serine 152 is the Nucleophile of the active site. Arginine 221 is a binding site for substrate. Active-site residues include aspartate 315 and histidine 348. Residue aspartate 349 coordinates substrate. CBS domains are found at residues 375 to 432 (MNTQ…YTSL) and 436 to 490 (MSSQ…GRGP).

Belongs to the AB hydrolase superfamily. MetX family. In terms of assembly, homodimer.

Its subcellular location is the cytoplasm. It carries out the reaction L-homoserine + acetyl-CoA = O-acetyl-L-homoserine + CoA. Its pathway is amino-acid biosynthesis; L-methionine biosynthesis via de novo pathway; O-acetyl-L-homoserine from L-homoserine: step 1/1. Its function is as follows. Transfers an acetyl group from acetyl-CoA to L-homoserine, forming acetyl-L-homoserine. This chain is Homoserine O-acetyltransferase, found in Methanosphaerula palustris (strain ATCC BAA-1556 / DSM 19958 / E1-9c).